A 295-amino-acid polypeptide reads, in one-letter code: Very long chain fatty acid elongase 5 (295 aa).

The next 7 helical transmembrane spans lie at 26–46 (WLLLDNYVPTIFFTALYLFIV), 64–84 (ILVVYNLGLTLLSFYMFYELV), 112–132 (VLWWYYFSKLIEFMDTFFFIL), 150–170 (MLNIWWFVMNWVPCGHSFFGA), 172–192 (LNSFIHVLMYSYYGLSAIPAI), 207–223 (LTQFVLTMTQTTCAMIW), and 227–247 (FPMGWLYFQNSYMISLIILFT). The segment at 265–295 (YQNGSASAVNGYTNSFSSLEDNVKQRKQRQN) is disordered. Polar residues predominate over residues 266–284 (QNGSASAVNGYTNSFSSLE).

It belongs to the ELO family. ELOVL5 subfamily.

The protein resides in the endoplasmic reticulum membrane. Its subcellular location is the cell projection. It is found in the dendrite. The enzyme catalyses a very-long-chain acyl-CoA + malonyl-CoA + H(+) = a very-long-chain 3-oxoacyl-CoA + CO2 + CoA. It catalyses the reaction (6Z,9Z,12Z)-octadecatrienoyl-CoA + malonyl-CoA + H(+) = (8Z,11Z,14Z)-3-oxoeicosatrienoyl-CoA + CO2 + CoA. The catalysed reaction is (9Z,12Z,15Z)-octadecatrienoyl-CoA + malonyl-CoA + H(+) = (11Z,14Z,17Z)-3-oxoeicosatrienoyl-CoA + CO2 + CoA. It carries out the reaction (9Z)-hexadecenoyl-CoA + malonyl-CoA + H(+) = 3-oxo-(11Z)-octadecenoyl-CoA + CO2 + CoA. The enzyme catalyses (9Z)-octadecenoyl-CoA + malonyl-CoA + H(+) = 3-oxo-(11Z)-eicosenoyl-CoA + CO2 + CoA. It catalyses the reaction (11Z)-octadecenoyl-CoA + malonyl-CoA + H(+) = 3-oxo-(13Z)-eicosenoyl-CoA + CO2 + CoA. The catalysed reaction is (9Z,12Z)-octadecadienoyl-CoA + malonyl-CoA + H(+) = (11Z,14Z)-3-oxoicosa-11,14-dienoyl-CoA + CO2 + CoA. It carries out the reaction (6Z,9Z,12Z,15Z)-octadecatetraenoyl-CoA + malonyl-CoA + H(+) = (8Z,11Z,14Z,17Z)-3-oxoicosatetraenoyl-CoA + CO2 + CoA. The enzyme catalyses (5Z,8Z,11Z,14Z)-eicosatetraenoyl-CoA + malonyl-CoA + H(+) = (7Z,10Z,13Z,16Z)-3-oxodocosatetraenoyl-CoA + CO2 + CoA. It catalyses the reaction (5Z,8Z,11Z,14Z,17Z)-eicosapentaenoyl-CoA + malonyl-CoA + H(+) = 3-oxo-(7Z,10Z,13Z,16Z,19Z)-docosapentaenoyl-CoA + CO2 + CoA. It functions in the pathway lipid metabolism; polyunsaturated fatty acid biosynthesis. In terms of biological role, catalyzes the first and rate-limiting reaction of the four reactions that constitute the long-chain fatty acids elongation cycle. This endoplasmic reticulum-bound enzymatic process allows the addition of 2 carbons to the chain of long- and very long-chain fatty acids (VLCFAs) per cycle. Condensing enzyme that acts specifically toward polyunsaturated acyl-CoA with the higher activity toward C18:3(n-6) acyl-CoA. May participate in the production of monounsaturated and of polyunsaturated VLCFAs of different chain lengths that are involved in multiple biological processes as precursors of membrane lipids and lipid mediators. In conditions where the essential linoleic and alpha linoleic fatty acids are lacking it is also involved in the synthesis of Mead acid from oleic acid. This is Very long chain fatty acid elongase 5 from Xenopus laevis (African clawed frog).